We begin with the raw amino-acid sequence, 102 residues long: Small ribosomal subunit protein uS10 (102 aa).

It belongs to the universal ribosomal protein uS10 family. As to quaternary structure, part of the 30S ribosomal subunit.

Its function is as follows. Involved in the binding of tRNA to the ribosomes. The protein is Small ribosomal subunit protein uS10 of Staphylococcus aureus (strain Mu3 / ATCC 700698).